The primary structure comprises 603 residues: Spastin (603 aa).

The interval 1–34 (MNSPGGRNNKKKPVTPAAETGPGPPTPPPPPAET) is disordered. The Cytoplasmic segment spans residues 1 to 54 (MNSPGGRNNKKKPVTPAAETGPGPPTPPPPPAETQVLLAPPSLHKRNLYLFSYP). Positions 22-32 (PGPPTPPPPPA) are enriched in pro residues. Positions 55 to 75 (LLAAFSLLRFLAFQLGLLFVW) form an intramembrane region, helical. The Cytoplasmic segment spans residues 76-603 (FCERLSRRVM…WNKEFGDTTV (528 aa)). The MIT domain occupies 113 to 188 (YHQQAFQYIS…LMAKDRLQLL (76 aa)). The interval 216-294 (GLLKPEKGAV…RTNKPTTPTT (79 aa)) is disordered. A compositionally biased stretch (basic and acidic residues) spans 219 to 231 (KPEKGAVPKKKDP). Low complexity predominate over residues 281-294 (KNNTRTNKPTTPTT). 369 to 376 (GPPGNGKT) lines the ATP pocket.

This sequence belongs to the AAA ATPase family. Spastin subfamily. In terms of assembly, homohexamer. The homohexamer is stabilized by ATP-binding. The homohexamer may adopt a ring conformation through which microtubules pass prior to being severed. Interacts with microtubules.

Its subcellular location is the membrane. The protein resides in the cytoplasm. It localises to the cytoskeleton. It is found in the microtubule organizing center. The protein localises to the centrosome. Its subcellular location is the perinuclear region. The protein resides in the nucleus. It carries out the reaction n ATP + n H2O + a microtubule = n ADP + n phosphate + (n+1) alpha/beta tubulin heterodimers.. Its function is as follows. ATP-dependent microtubule severing protein that specifically recognizes and cuts microtubules that are polyglutamylated. Preferentially recognizes and acts on microtubules decorated with short polyglutamate tails: severing activity increases as the number of glutamates per tubulin rises from one to eight, but decreases beyond this glutamylation threshold. Microtubule severing promotes reorganization of cellular microtubule arrays and the release of microtubules from the centrosome following nucleation. Required for membrane traffic from the endoplasmic reticulum (ER) to the Golgi and for completion of the abscission stage of cytokinesis. Also plays a role in axon growth and the formation of axonal branches. This Xenopus tropicalis (Western clawed frog) protein is Spastin.